The sequence spans 314 residues: Homoserine O-acetyltransferase (314 aa).

Cysteine 142 (acyl-thioester intermediate) is an active-site residue. Residues lysine 163 and serine 192 each coordinate substrate. Histidine 235 functions as the Proton acceptor in the catalytic mechanism. Glutamate 237 is an active-site residue. Arginine 249 is a binding site for substrate.

The protein belongs to the MetA family.

The protein resides in the cytoplasm. It catalyses the reaction L-homoserine + acetyl-CoA = O-acetyl-L-homoserine + CoA. It functions in the pathway amino-acid biosynthesis; L-methionine biosynthesis via de novo pathway; O-acetyl-L-homoserine from L-homoserine: step 1/1. Its function is as follows. Transfers an acetyl group from acetyl-CoA to L-homoserine, forming acetyl-L-homoserine. This chain is Homoserine O-acetyltransferase, found in Streptococcus thermophilus (strain ATCC BAA-491 / LMD-9).